Reading from the N-terminus, the 471-residue chain is MKIKTRFAPSPTGYLHVGGARTALYSWLFARNQGGEFVLRIEDTDLERSTPEAIEAIMDGMNWLSLEWDEGPYFQTKRFDRYNAVIDEMLAAGTAYKCYCSKERLEALREEQMAKGEKPRYDGRCRHSHEHHADDEPCVVRFANPQDGSVVFDDQIRGPIEFSNLELDDLIIRRTDGSPTYNFCVVVDDWDMEITHVIRGEDHINNTPRQINILKALGAPVPLYAHVSMINGDDGKKLSKRHGAVSVMQYRDDGYLPEALLNYLVRLGWSHGDQEIFSREEMIKFFALDAVSKSASAFNTDKLLWLNHHYINTLAPEYVATHLQWHIEQENIDTRNGPQLAELVKLLGERCKTLKEMAQTCRYFYEDFSEFDADAAKKHLRPVARQPLEVVRDKLSALTDWTAENVHHAIQATADELEVGMGKVGMPLRVAVTGAGQSPGLDVTVHAIGKSRSVERINKALAFIAERENQQ.

The 'HIGH' region motif lies at 9 to 19; it reads PSPTGYLHVGG. The Zn(2+) site is built by C98, C100, C125, and H127. The 'KMSKS' region motif lies at 237–241; it reads KLSKR. K240 contacts ATP.

This sequence belongs to the class-I aminoacyl-tRNA synthetase family. Glutamate--tRNA ligase type 1 subfamily. Monomer. Zn(2+) serves as cofactor.

It is found in the cytoplasm. It carries out the reaction tRNA(Glu) + L-glutamate + ATP = L-glutamyl-tRNA(Glu) + AMP + diphosphate. In terms of biological role, catalyzes the attachment of glutamate to tRNA(Glu) in a two-step reaction: glutamate is first activated by ATP to form Glu-AMP and then transferred to the acceptor end of tRNA(Glu). The protein is Glutamate--tRNA ligase of Cronobacter sakazakii (strain ATCC BAA-894) (Enterobacter sakazakii).